We begin with the raw amino-acid sequence, 1073 residues long: Envelopment polyprotein (1073 aa).

The signal sequence occupies residues 1–19 (MMKVIWFSSLICFVIQCSG). The Lumenal segment spans residues 20-453 (DSGPIICAGP…NPQCYPAKKW (434 aa)). A disulfide bridge links Cys-26 with Cys-49. Asn-33 and Asn-63 each carry an N-linked (GlcNAc...) asparagine; by host glycan. 10 disulfide bridges follow: Cys-143–Cys-156, Cys-180–Cys-327, Cys-206–Cys-216, Cys-258–Cys-305, Cys-266–Cys-303, Cys-274–Cys-280, Cys-287–Cys-292, Cys-349–Cys-352, Cys-356–Cys-424, and Cys-376–Cys-381. A helical membrane pass occupies residues 454 to 474 (LFIIIVILLGYAGLMLLTNVL). The interval 475 to 521 (KAIGIWGSWVIAPVKLMFAIIKKLMRTVSCLMRKLMDRGRQVIHEEI) is golgi retention signal. Over 475-535 (KAIGIWGSWV…EGNQDDVRIE (61 aa)) the chain is Cytoplasmic. The segment at 536–562 (MARPRRVRHWMYSPVILTILAIGLAES) is internal signal sequence for glycoprotein C. 10 disulfide bridges follow: Cys-563–Cys-604, Cys-576–Cys-586, Cys-629–Cys-725, Cys-644–Cys-841, Cys-650–Cys-698, Cys-656–Cys-705, Cys-660–Cys-687, Cys-691–Cys-696, Cys-778–Cys-793, and Cys-809–Cys-823. Over 563 to 1036 (CDEMVHADSK…ALFGNGLSRW (474 aa)) the chain is Lumenal. The interval 650–656 (CRWAGDC) is fusion loop. The segment at 691–705 (CGGAACGCFNAAPSC) is fusion loop. Asn-853 and Asn-914 each carry an N-linked (GlcNAc...) asparagine; by host glycan. Intrachain disulfides connect Cys-908–Cys-978, Cys-918–Cys-921, and Cys-943–Cys-974. A glycan (N-linked (GlcNAc...) asparagine; by host) is linked at Asn-936. A helical transmembrane segment spans residues 1037–1057 (ILGVIGVLLGGLALFFMIMSL). Topologically, residues 1058 to 1073 (FKLGTKQVFRSRTKLA) are cytoplasmic.

This sequence belongs to the phlebovirus envelope glycoprotein family. Homodimer. Heterodimer with glycoprotein C. Homotrimer (postfusion). In terms of assembly, heterodimer with glycoprotein N. Specific enzymatic cleavages in vivo yield mature proteins including glycoprotein C and glycoprotein N. In terms of processing, the cytoplasmic tail is Palmitoylated. Post-translationally, glycosylated. Palmitoylated.

It is found in the virion membrane. Its subcellular location is the host Golgi apparatus membrane. It localises to the host endoplasmic reticulum membrane. Structural component of the virion that interacts with glycoprotein C. It shields the hydrophobic fusion loops of the glycoprotein C, preventing premature fusion. The glycoprotein protrusions are arranged on an icosahedral lattice, with T=12 triangulation. They are able to attach the virion to the host cell receptor CD209/DC-SIGN and to promote fusion of membranes with the late endosome after clathrin-mediated endocytosis of the virion. Plays a role in the packaging of ribonucleoproteins during virus assembly. In terms of biological role, structural component of the virion that interacts with glycoprotein N. Acts as a class II fusion protein that is activated upon acidification and subsequent repositioning of the glycoprotein N. The glycoprotein protrusions are arranged on an icosahedral lattice, with T=12 triangulation. They are able to attach the virion to the host cell receptor CD209/DC-SIGN and to promote fusion of membranes with the late endosome after clathrin-mediated endocytosis of the virion. The sequence is that of Envelopment polyprotein from Dabie bandavirus (Severe fever with thrombocytopenia virus).